We begin with the raw amino-acid sequence, 411 residues long: Serpin A3-2 (411 aa).

Positions 1–24 (MRAERTSFLLALGLLVAGIRSVHC) are cleaved as a signal peptide. N-linked (GlcNAc...) asparagine glycosylation is found at N100, N180, N230, and N264.

Belongs to the serpin family. As to quaternary structure, homodimer.

It is found in the cytoplasmic vesicle. The protein localises to the secretory vesicle. The protein resides in the chromaffin granule. It localises to the secreted. In terms of biological role, serine protease inhibitor. The polypeptide is Serpin A3-2 (Bos taurus (Bovine)).